The sequence spans 226 residues: Ribonuclease 3 (226 aa).

The 123-residue stretch at 6–128 folds into the RNase III domain; that stretch reads INRLQRKLGY…LIGGVFLDSD (123 aa). Glutamate 41 serves as a coordination point for Mg(2+). Aspartate 45 is a catalytic residue. Aspartate 114 and glutamate 117 together coordinate Mg(2+). Glutamate 117 is an active-site residue. In terms of domain architecture, DRBM spans 155-225; sequence DPKTRLQEYL…AEQALKKLEL (71 aa).

The protein belongs to the ribonuclease III family. As to quaternary structure, homodimer. The cofactor is Mg(2+).

It is found in the cytoplasm. It carries out the reaction Endonucleolytic cleavage to 5'-phosphomonoester.. Functionally, digests double-stranded RNA. Involved in the processing of primary rRNA transcript to yield the immediate precursors to the large and small rRNAs (23S and 16S). Processes some mRNAs, and tRNAs when they are encoded in the rRNA operon. Processes pre-crRNA and tracrRNA of type II CRISPR loci if present in the organism. The polypeptide is Ribonuclease 3 (Escherichia coli O139:H28 (strain E24377A / ETEC)).